Here is a 105-residue protein sequence, read N- to C-terminus: V-type ATP synthase subunit F (105 aa).

It belongs to the V-ATPase F subunit family.

In terms of biological role, produces ATP from ADP in the presence of a proton gradient across the membrane. The sequence is that of V-type ATP synthase subunit F from Clostridium perfringens (strain 13 / Type A).